Consider the following 445-residue polypeptide: N-succinylarginine dihydrolase (445 aa).

Substrate-binding positions include 19–28, Asn-110, and 137–138; these read AGLSFGNVAS and HR. The active site involves Glu-174. Arg-214 contacts substrate. His-250 is an active-site residue. Substrate contacts are provided by Asp-252 and Asn-363. Cys-369 functions as the Nucleophile in the catalytic mechanism.

Belongs to the succinylarginine dihydrolase family. Homodimer.

The catalysed reaction is N(2)-succinyl-L-arginine + 2 H2O + 2 H(+) = N(2)-succinyl-L-ornithine + 2 NH4(+) + CO2. It participates in amino-acid degradation; L-arginine degradation via AST pathway; L-glutamate and succinate from L-arginine: step 2/5. Its function is as follows. Catalyzes the hydrolysis of N(2)-succinylarginine into N(2)-succinylornithine, ammonia and CO(2). The protein is N-succinylarginine dihydrolase of Shewanella piezotolerans (strain WP3 / JCM 13877).